The primary structure comprises 297 residues: DNA excision repair protein ERCC-1 (297 aa).

Met1 bears the N-acetylmethionine mark. A disordered region spans residues 1–39 (MDPGKDKEGVPQPSGPPARKKFVIPLDEDEVPPGVAKPL). The Nuclear localization signal motif lies at 17 to 23 (PARKKFV). Glycyl lysine isopeptide (Lys-Gly) (interchain with G-Cter in SUMO2) cross-links involve residues Lys21 and Lys37. The DNA-binding element occupies 134–156 (QSTCALFLSLRYHNLHPDYIHGR). The interval 220–297 (ADLLMEKLEQ…VLHEPFLKVP (78 aa)) is hhH2, dimerization with ERCC4/XPF. Lys243 is covalently cross-linked (Glycyl lysine isopeptide (Lys-Gly) (interchain with G-Cter in SUMO2)).

This sequence belongs to the ERCC1/RAD10/SWI10 family. As to quaternary structure, heterodimer composed of ERCC1 isoform 1 and ERCC4/XPF. Interacts with USP45. Does not interact with ERCC4/XPF. In terms of processing, ubiquitinated with both 'Lys-48' and 'Lys-63' linkages. Deubiquitinated by USP45.

The protein resides in the nucleus. Its subcellular location is the cytoplasm. In terms of biological role, non-catalytic component of a structure-specific DNA repair endonuclease responsible for the 5'-incision during DNA repair. Responsible, in conjunction with SLX4, for the first step in the repair of interstrand cross-links (ICL). Participates in the processing of anaphase bridge-generating DNA structures, which consist in incompletely processed DNA lesions arising during S or G2 phase, and can result in cytokinesis failure. Also required for homology-directed repair (HDR) of DNA double-strand breaks, in conjunction with SLX4. Not functional in the nucleotide excision repair pathway. In Homo sapiens (Human), this protein is DNA excision repair protein ERCC-1 (ERCC1).